We begin with the raw amino-acid sequence, 155 residues long: Interleukin-2 (155 aa).

An N-terminal signal peptide occupies residues 1 to 20; that stretch reads MYKIQLLSCIALTLALVANG. A glycan (O-linked (GalNAc...) threonine) is linked at Thr23. The cysteines at positions 79 and 127 are disulfide-linked.

The protein belongs to the IL-2 family.

The protein resides in the secreted. Its function is as follows. Cytokine produced by activated CD4-positive helper T-cells and to a lesser extend activated CD8-positive T-cells and natural killer (NK) cells that plays pivotal roles in the immune response and tolerance. Binds to a receptor complex composed of either the high-affinity trimeric IL-2R (IL2RA/CD25, IL2RB/CD122 and IL2RG/CD132) or the low-affinity dimeric IL-2R (IL2RB and IL2RG). Interaction with the receptor leads to oligomerization and conformation changes in the IL-2R subunits resulting in downstream signaling starting with phosphorylation of JAK1 and JAK3. In turn, JAK1 and JAK3 phosphorylate the receptor to form a docking site leading to the phosphorylation of several substrates including STAT5. This process leads to activation of several pathways including STAT, phosphoinositide-3-kinase/PI3K and mitogen-activated protein kinase/MAPK pathways. Functions as a T-cell growth factor and can increase NK-cell cytolytic activity as well. Promotes strong proliferation of activated B-cells and subsequently immunoglobulin production. Plays a pivotal role in regulating the adaptive immune system by controlling the survival and proliferation of regulatory T-cells, which are required for the maintenance of immune tolerance. Moreover, participates in the differentiation and homeostasis of effector T-cell subsets, including Th1, Th2, Th17 as well as memory CD8-positive T-cells. In Ovis aries (Sheep), this protein is Interleukin-2 (IL2).